The primary structure comprises 42 residues: Photosystem II reaction center protein J (42 aa).

A helical membrane pass occupies residues 10-30 (IPLWLVGTVVGTLAIGLLAVF).

The protein belongs to the PsbJ family. As to quaternary structure, PSII is composed of 1 copy each of membrane proteins PsbA, PsbB, PsbC, PsbD, PsbE, PsbF, PsbH, PsbI, PsbJ, PsbK, PsbL, PsbM, PsbT, PsbX, PsbY, PsbZ, Psb30/Ycf12, at least 3 peripheral proteins of the oxygen-evolving complex and a large number of cofactors. It forms dimeric complexes.

It is found in the plastid. The protein resides in the chloroplast thylakoid membrane. Its function is as follows. One of the components of the core complex of photosystem II (PSII). PSII is a light-driven water:plastoquinone oxidoreductase that uses light energy to abstract electrons from H(2)O, generating O(2) and a proton gradient subsequently used for ATP formation. It consists of a core antenna complex that captures photons, and an electron transfer chain that converts photonic excitation into a charge separation. The protein is Photosystem II reaction center protein J of Chlamydomonas reinhardtii (Chlamydomonas smithii).